The following is a 934-amino-acid chain: Palmitoyltransferase ZDHHC8 (934 aa).

Residues 1–9 (MPKCDVKTR) lie on the Cytoplasmic side of the membrane. The helical transmembrane segment at 10–30 (YIPATFAWIVLLLTTFLFFFY) threads the bilayer. Residues 31-47 (PCQFYVKSHPWVLAYQG) are Extracellular-facing. The helical transmembrane segment at 48-68 (VITFFVLANFTLATFMDPGII) threads the bilayer. At 69-142 (PKASPDEDCE…NNCIGRRNYR (74 aa)) the chain is on the cytoplasmic side. A DHHC domain is found at 99–149 (KWCVTCKFYRPPRCSHCSVCNHCIETFDHHCPWVNNCIGRRNYRFFFFFLV). Cysteine 129 (S-palmitoyl cysteine intermediate) is an active-site residue. The chain crosses the membrane as a helical span at residues 143 to 163 (FFFFFLVSLSIHMLSIFSLCL). Residues 164–177 (VYVLKIMPNIKDTA) are Extracellular-facing. A helical membrane pass occupies residues 178-198 (PIVAIILMGLVTILAIPIFGL). Residues 199 to 934 (TGFHMVLVSR…IYDMNYEISV (736 aa)) are Cytoplasmic-facing. Disordered regions lie at residues 336–440 (NGYN…GYTS), 506–525 (MASP…RRPD), 669–705 (QRGV…SGIG), 751–780 (QQQQ…TMPQ), 835–862 (PNPM…TPTR), and 881–934 (LEQQ…EISV). Polar residues-rich tracts occupy residues 337–349 (GYNQ…TLYS) and 381–394 (RHNS…QVSD). Over residues 397–411 (GLNGSVSTGGGGGGD) the composition is skewed to gly residues. A compositionally biased stretch (basic residues) spans 415 to 429 (HMRLYHPRHSPHARP). Composition is skewed to low complexity over residues 688–705 (QQQQ…SGIG) and 751–765 (QQQQ…AAAA). Residues 768 to 780 (HRSNPTSPTTMPQ) are compositionally biased toward polar residues. The span at 910–919 (MQSNASNSGT) shows a compositional bias: polar residues.

This sequence belongs to the DHHC palmitoyltransferase family. ERF2/ZDHHC9 subfamily.

Its subcellular location is the golgi apparatus membrane. It localises to the cell membrane. The catalysed reaction is L-cysteinyl-[protein] + hexadecanoyl-CoA = S-hexadecanoyl-L-cysteinyl-[protein] + CoA. Its function is as follows. Palmitoyltransferase that catalyzes the addition of palmitate onto various protein substrates and therefore functions in several unrelated biological processes. Regulates tissue growth possibly by regulating Ras64B protein stability. May regulate CG34450 mRNA levels. This Drosophila melanogaster (Fruit fly) protein is Palmitoyltransferase ZDHHC8.